The sequence spans 635 residues: Chaperone protein HtpG (635 aa).

The a; substrate-binding stretch occupies residues 1–343; that stretch reads MTAEATVETR…SNDLSLNVSR (343 aa). Residues 344 to 560 are b; sequence EILQQDPNID…EHDMGAQMRR (217 aa). Residues 561–635 are c; that stretch reads LLEAAGQAVP…LNKLLLELSN (75 aa).

This sequence belongs to the heat shock protein 90 family. In terms of assembly, homodimer.

Its subcellular location is the cytoplasm. Functionally, molecular chaperone. Has ATPase activity. The polypeptide is Chaperone protein HtpG (Saccharophagus degradans (strain 2-40 / ATCC 43961 / DSM 17024)).